A 252-amino-acid chain; its full sequence is Probable oligoribonuclease (252 aa).

The Exonuclease domain occupies 81–241 (VWIDCEMTGL…ALSDILESIG (161 aa)). The active site involves Tyr202.

The protein belongs to the oligoribonuclease family.

The protein resides in the cytoplasm. The protein localises to the nucleus. 3'-to-5' exoribonuclease specific for small oligoribonucleotides. In Schizosaccharomyces pombe (strain 972 / ATCC 24843) (Fission yeast), this protein is Probable oligoribonuclease (rex2).